A 272-amino-acid polypeptide reads, in one-letter code: Pyrroline-5-carboxylate reductase 3 (272 aa).

It belongs to the pyrroline-5-carboxylate reductase family.

It is found in the cytoplasm. The catalysed reaction is L-proline + NADP(+) = (S)-1-pyrroline-5-carboxylate + NADPH + 2 H(+). It carries out the reaction L-proline + NAD(+) = (S)-1-pyrroline-5-carboxylate + NADH + 2 H(+). It functions in the pathway amino-acid biosynthesis; L-proline biosynthesis; L-proline from L-glutamate 5-semialdehyde: step 1/1. In terms of biological role, catalyzes the reduction of 1-pyrroline-5-carboxylate (PCA) to L-proline. The chain is Pyrroline-5-carboxylate reductase 3 (proG) from Bacillus subtilis (strain 168).